The sequence spans 439 residues: Forkhead box protein J1-A (439 aa).

A DNA-binding region (fork-head) is located at residues 124-218 (KPPYSYATLI…INGAMKKRRL (95 aa)). The disordered stretch occupies residues 273-293 (EHGWNSISDGKSHKRKQPLPK). The span at 284 to 293 (SHKRKQPLPK) shows a compositional bias: basic residues.

It belongs to the FOXJ1 family. As to expression, expressed in two independent areas of stage 10-11 embryos; in the dorsal blastopore lip (Spemann organizer) and shortly after in the ectodermal cells of the animal cap. As development proceeds, cells of the animal cap contribute to the epidermis and show a spotty pattern, which suggests expression in ciliated epidermal cells. Distribution of these cells is uniform in the trunk area of the embryo but more random in the head, being practically absent in the cement gland and olfactory placode. The spotted pattern becomes more dispersed as embryos grow in size. Due to cell movements during gastrulation, expression in the dorsal lip becomes located in the dorsal midline with expression restricted to the neuroectoderm. Expressed transiently in cells of the newly formed neural floor plate in the tail of older tadpoles.

The protein localises to the nucleus. In terms of biological role, key transcription factor required for motile ciliogenesis. Activates genes essential for motile cilia formation and function. Required for ciliogenesis in multiciliated cells. This chain is Forkhead box protein J1-A (foxj1-a), found in Xenopus laevis (African clawed frog).